The chain runs to 392 residues: Galactokinase (392 aa).

Residues Arg-37, Glu-43, His-44, and Asp-46 each contribute to the alpha-D-galactose site. Positions 136, 138, 140, and 141 each coordinate ATP. Asp-186 lines the alpha-D-galactose pocket. The Proton acceptor role is filled by Asp-186. A Phosphoserine modification is found at Ser-230. Tyr-236 is an alpha-D-galactose binding site.

Belongs to the GHMP kinase family. GalK subfamily. As to quaternary structure, homodimer.

It carries out the reaction alpha-D-galactose + ATP = alpha-D-galactose 1-phosphate + ADP + H(+). Its pathway is carbohydrate metabolism; galactose metabolism. Its function is as follows. Catalyzes the transfer of a phosphate from ATP to alpha-D-galactose and participates in the first committed step in the catabolism of galactose. The chain is Galactokinase (GALK1) from Canis lupus familiaris (Dog).